Here is a 501-residue protein sequence, read N- to C-terminus: Beta-secretase 1 (501 aa).

An N-terminal signal peptide occupies residues 1–21 (MAPALHWLLLWVGSGMLPAQG). Residues 22-45 (THLGIRLPLRSGLAGPPLGLRLPR) constitute a propeptide that is removed on maturation. At 22 to 457 (THLGIRLPLR…PQTDESTLMT (436 aa)) the chain is on the extracellular side. The disordered stretch occupies residues 39–58 (LGLRLPRETDEESEEPGRRG). The 342-residue stretch at 75-416 (YYVEMTVGSP…DRARKRIGFA (342 aa)) folds into the Peptidase A1 domain. The active site involves Asp-93. The residue at position 126 (Lys-126) is an N6-acetyllysine. 3 N-linked (GlcNAc...) asparagine glycosylation sites follow: Asn-153, Asn-172, and Asn-223. Intrachain disulfides connect Cys-216-Cys-420, Cys-278-Cys-443, and Cys-330-Cys-380. N6-acetyllysine occurs at positions 275, 279, and 285. Asp-289 is an active-site residue. Residues Lys-299, Lys-300, and Lys-307 each carry the N6-acetyllysine modification. N-linked (GlcNAc...) asparagine glycosylation occurs at Asn-354. The chain crosses the membrane as a helical span at residues 458-478 (IAYVMAAICALFMLPLCLMVC). 4 S-palmitoyl cysteine lipidation sites follow: Cys-474, Cys-478, Cys-482, and Cys-485. Residues 479–501 (QWRCLRCLRHQHDDFADDISLLK) lie on the Cytoplasmic side of the membrane. Residues 479–501 (QWRCLRCLRHQHDDFADDISLLK) are interaction with RTN3. A DXXLL motif is present at residues 496–500 (DISLL). A Phosphoserine modification is found at Ser-498. Lys-501 participates in a covalent cross-link: Glycyl lysine isopeptide (Lys-Gly) (interchain with G-Cter in ubiquitin).

This sequence belongs to the peptidase A1 family. In terms of assembly, monomer. Interacts (via DXXLL motif) with GGA1, GGA2 and GGA3 (via their VHS domain); the interaction highly increases when BACE1 is phosphorylated at Ser-498. Interacts with RTN1; RTN2; RTN3 and RTN4; the interaction leads to inhibition of amyloid precursor protein processing. Interacts with SNX6. Interacts with PCSK9. Interacts with NAT8 and NAT8B. Interacts with BIN1. Interacts (via extracellular domain) with ADAM10 (via extracellular domain). Interacts with SORL1; this interaction may affect binding with APP and hence reduce APP cleavage. Interacts with NRDC AND NRG1. Post-translationally, N-Glycosylated. Addition of a bisecting N-acetylglucosamine by MGAT3 blocks lysosomal targeting, further degradation and is required for maintaining stability under stress conditions. In terms of processing, palmitoylation mediates lipid raft localization. Acetylated in the endoplasmic reticulum at Lys-126, Lys-275, Lys-279, Lys-285, Lys-299, Lys-300 and Lys-307. Acetylation by NAT8 and NAT8B is transient and deacetylation probably occurs in the Golgi. Acetylation regulates the maturation, the transport to the plasma membrane, the stability and the expression of the protein. Post-translationally, ubiquitinated at Lys-501, ubiquitination leads to lysosomal degradation. Monoubiquitinated and 'Lys-63'-linked polyubitinated. Deubiquitnated by USP8; inhibits lysosomal degradation. In terms of processing, phosphorylation at Ser-498 is required for interaction with GGA1 and retrograded transport from endosomal compartments to the trans-Golgi network. Non-phosphorylated BACE1 enters a direct recycling route to the cell surface. In terms of tissue distribution, expressed in the brain, specifically in neurons and astrocytes (at protein level).

It localises to the cell membrane. The protein resides in the golgi apparatus. The protein localises to the trans-Golgi network. It is found in the endoplasmic reticulum. Its subcellular location is the endosome. It localises to the late endosome. The protein resides in the early endosome. The protein localises to the cell surface. It is found in the cytoplasmic vesicle membrane. Its subcellular location is the membrane raft. It localises to the lysosome. The protein resides in the recycling endosome. The protein localises to the cell projection. It is found in the axon. Its subcellular location is the dendrite. It carries out the reaction Broad endopeptidase specificity. Cleaves Glu-Val-Asn-Leu-|-Asp-Ala-Glu-Phe in the Swedish variant of Alzheimer's amyloid precursor protein.. Inhibited by RTN3 and RTN4. In terms of biological role, responsible for the proteolytic processing of the amyloid precursor protein (APP). Cleaves at the N-terminus of the A-beta peptide sequence, between residues 671 and 672 of APP, leads to the generation and extracellular release of beta-cleaved soluble APP, and a corresponding cell-associated C-terminal fragment which is later released by gamma-secretase. Cleaves CHL1. This chain is Beta-secretase 1, found in Mus musculus (Mouse).